Here is a 456-residue protein sequence, read N- to C-terminus: Toxin CfTX-1 (456 aa).

Positions 1-20 are cleaved as a signal peptide; the sequence is MVKMLFFAFLPLLFMTGIAA.

It belongs to the jellyfish toxin family. Type I subfamily. As to quaternary structure, oligomer. Post-translationally, contains disulfide bonds. In terms of tissue distribution, nematocytes.

The protein resides in the secreted. It is found in the nematocyst. It localises to the target cell membrane. Functionally, may cause profound effects on the cardiovascular system of anesthetized rats (at 25 ug/kg), since the fraction containing this toxin and CfTX-2 produces an initial increase in mean arterial pressure, followed by cardiovascular collapse in all animals within 1 minute of injection. To note, the same fraction does not induce significant change in heart rate. Has weak hemolytic activity. Is lethal to crayfish. Causes cutaneous inflammation in humans. May act as a pore-forming toxin, disrupting normal transmembrane ion concentration gradients in susceptible cells. In Chironex fleckeri (Australian box jellyfish), this protein is Toxin CfTX-1.